The following is a 486-amino-acid chain: Cardiolipin synthase A (486 aa).

Helical transmembrane passes span 3–23 (TFYTVLSWLTFFFYWLLIAGV) and 38–58 (MTWLLIIYILPLVGVIAYFAF). 2 PLD phosphodiesterase domains span residues 219–246 (MDLRQHRKIVLIDNYISYTGSMNMVDPR) and 399–426 (EDGLLHTKSVMVDGQLSMVGSVNLDMRS). Residues His224, Lys226, Asp231, His404, Lys406, and Asp411 contribute to the active site.

It belongs to the phospholipase D family. Cardiolipin synthase subfamily. ClsA sub-subfamily.

The protein localises to the cell inner membrane. It carries out the reaction 2 a 1,2-diacyl-sn-glycero-3-phospho-(1'-sn-glycerol) = a cardiolipin + glycerol. Functionally, catalyzes the reversible phosphatidyl group transfer from one phosphatidylglycerol molecule to another to form cardiolipin (CL) (diphosphatidylglycerol) and glycerol. The protein is Cardiolipin synthase A of Proteus mirabilis (strain HI4320).